A 447-amino-acid polypeptide reads, in one-letter code: Glutamyl-tRNA reductase (447 aa).

Residues 56–59, Ser119, 124–126, and Gln130 each bind substrate; these read TCNR and ETQ. Cys57 acts as the Nucleophile in catalysis. 201–206 is a binding site for NADP(+); the sequence is GLGEMS.

The protein belongs to the glutamyl-tRNA reductase family. Homodimer.

It catalyses the reaction (S)-4-amino-5-oxopentanoate + tRNA(Glu) + NADP(+) = L-glutamyl-tRNA(Glu) + NADPH + H(+). Its pathway is porphyrin-containing compound metabolism; protoporphyrin-IX biosynthesis; 5-aminolevulinate from L-glutamyl-tRNA(Glu): step 1/2. Its function is as follows. Catalyzes the NADPH-dependent reduction of glutamyl-tRNA(Glu) to glutamate 1-semialdehyde (GSA). The chain is Glutamyl-tRNA reductase from Helicobacter acinonychis (strain Sheeba).